The chain runs to 203 residues: A-type ATP synthase subunit E (203 aa).

Belongs to the V-ATPase E subunit family. Might form a homodimer. Interacts with subunit H via residues 41-60. The A-type ATPase is composed of subunits A(3), B(3), C, D, E(1 or 2), F, H(2), I and K(x).

It localises to the cell membrane. Its function is as follows. Component of the A-type ATP synthase that produces ATP from ADP in the presence of a proton gradient across the membrane. The polypeptide is A-type ATP synthase subunit E (Methanocaldococcus jannaschii (strain ATCC 43067 / DSM 2661 / JAL-1 / JCM 10045 / NBRC 100440) (Methanococcus jannaschii)).